Consider the following 895-residue polypeptide: MLRRRGGPNELRDELNNSKNQPEDDQRTKRGRESIGFRHWIYFVLTVAIVYAGVVALHRKMPAVRDGTSFEDFSEQRARVLLKQLTALGSRPSGSDNLEVKAFGMIQDRIGKIHSVVDEVGVNRLESDVQRPSGCFDLKFLSSFTLCYHKITNVVVRIGPKKGPSGNSLLLNCHFDTMPDTPGATDDAVACTIMMDVLEVLAHSKTELENDVVFLFNGAEENFLQAAHGFINQHPWRHDIRAFINLEGTGSGGREILFQAGPGNSWLLQTYLENAPHPFCSVLAQEIFQSGIIPSDTDFRIFRDYGRISGLDIAYTKNGWFYHTEFDEEWRIEPGAIQRAGENVLAVVRAILKSPYLEKPATFDEENRWVFYDVVGLFTVYYSVNVGKLLNYIACFATYFLVVLRIRNRLYSVGDLAIAFKHHVVAFLAMVITMLLIIAFVVQMDLVMCWYKMPEIVGALYVLPMLIAGAIVHSHYADNNRIRNVEMVQYDTILLSFASILFLMTFYNLSSAFYVLNNLILPVFKDIIIWALGLFGVIRRVTPRVLFFTQLFCFLPTFVFAAYAISQCVDFFVPVMGRLGNAINPEFIMGPLGLVIASGFILFVNNLFYISRRMNYIIRLLFAIFALFILVLITTKVGNPYEYSHENPRLRRIIALHANRTIYDFEGHLTQKDNALFVHSLDYRGASDLPDHSFLQGSSAPNCTGVVDEYCRMPYYTAIHELFPPEQSLWVPVPSPVVLPYPIDLKLVSRHAMGENLNLTFEIRGGYDKMSLHVTPLNDYDLLSWSFTDIDIKEFGRRQTYFVFMTYGHEAPEVRRFWILLKNKNGVAPDPEKHENIELSVATHYAHGIYQDTETLRQLRAMISSRRQTPEQAVGWWRWGITMVGGRSEIVVKIF.

Residues 1 to 30 form a disordered region; it reads MLRRRGGPNELRDELNNSKNQPEDDQRTKR. Residues 1–34 are Cytoplasmic-facing; it reads MLRRRGGPNELRDELNNSKNQPEDDQRTKRGRES. Positions 10–30 are enriched in basic and acidic residues; it reads ELRDELNNSKNQPEDDQRTKR. A helical membrane pass occupies residues 35–55; the sequence is IGFRHWIYFVLTVAIVYAGVV. Over 56-383 the chain is Lumenal; the sequence is ALHRKMPAVR…VVGLFTVYYS (328 aa). Zn(2+) contacts are provided by His-174 and Asp-186. Glu-220 acts as the Proton acceptor in catalysis. Zn(2+)-binding residues include Glu-221, Glu-247, and His-323. The helical transmembrane segment at 384 to 404 threads the bilayer; it reads VNVGKLLNYIACFATYFLVVL. The Cytoplasmic segment spans residues 405 to 423; the sequence is RIRNRLYSVGDLAIAFKHH. A helical membrane pass occupies residues 424–444; it reads VVAFLAMVITMLLIIAFVVQM. At 445 to 452 the chain is on the lumenal side; that stretch reads DLVMCWYK. A helical transmembrane segment spans residues 453-473; that stretch reads MPEIVGALYVLPMLIAGAIVH. The Cytoplasmic portion of the chain corresponds to 474-492; sequence SHYADNNRIRNVEMVQYDT. The helical transmembrane segment at 493–513 threads the bilayer; the sequence is ILLSFASILFLMTFYNLSSAF. Residues 514-517 lie on the Lumenal side of the membrane; sequence YVLN. Residues 518 to 538 form a helical membrane-spanning segment; sequence NLILPVFKDIIIWALGLFGVI. At 539-544 the chain is on the cytoplasmic side; that stretch reads RRVTPR. The chain crosses the membrane as a helical span at residues 545 to 565; sequence VLFFTQLFCFLPTFVFAAYAI. At 566-586 the chain is on the lumenal side; that stretch reads SQCVDFFVPVMGRLGNAINPE. Residues 587–607 form a helical membrane-spanning segment; sequence FIMGPLGLVIASGFILFVNNL. The Cytoplasmic segment spans residues 608–613; sequence FYISRR. A helical transmembrane segment spans residues 614–634; it reads MNYIIRLLFAIFALFILVLIT. The Lumenal segment spans residues 635-895; that stretch reads TKVGNPYEYS…GRSEIVVKIF (261 aa). N-linked (GlcNAc...) asparagine glycosylation is found at Asn-659, Asn-702, and Asn-758.

It belongs to the peptidase M28 family. Requires Zn(2+) as cofactor.

The protein resides in the endoplasmic reticulum membrane. This chain is Putative endoplasmic reticulum metallopeptidase 1-A, found in Caenorhabditis elegans.